The chain runs to 321 residues: o-succinylbenzoate synthase (321 aa).

Lys-110 acts as the Proton donor in catalysis. Mg(2+) contacts are provided by Asp-138, Glu-165, and Asp-188. Catalysis depends on Lys-212, which acts as the Proton acceptor.

It belongs to the mandelate racemase/muconate lactonizing enzyme family. MenC type 1 subfamily. Requires a divalent metal cation as cofactor.

It carries out the reaction (1R,6R)-6-hydroxy-2-succinyl-cyclohexa-2,4-diene-1-carboxylate = 2-succinylbenzoate + H2O. It functions in the pathway quinol/quinone metabolism; 1,4-dihydroxy-2-naphthoate biosynthesis; 1,4-dihydroxy-2-naphthoate from chorismate: step 4/7. The protein operates within quinol/quinone metabolism; menaquinone biosynthesis. In terms of biological role, converts 2-succinyl-6-hydroxy-2,4-cyclohexadiene-1-carboxylate (SHCHC) to 2-succinylbenzoate (OSB). In Mycolicibacterium smegmatis (strain ATCC 700084 / mc(2)155) (Mycobacterium smegmatis), this protein is o-succinylbenzoate synthase.